Here is a 147-residue protein sequence, read N- to C-terminus: UPF0208 membrane protein PM0703 (147 aa).

A run of 2 helical transmembrane segments spans residues 32–52 (VIKATLFAQKFMPFLAVFAIT) and 65–85 (LAIAVFSAIVALLIPLQGLYW).

Belongs to the UPF0208 family.

The protein resides in the cell inner membrane. This is UPF0208 membrane protein PM0703 from Pasteurella multocida (strain Pm70).